The chain runs to 280 residues: Mastin (280 aa).

The signal sequence occupies residues 1 to 15 (MLWLLVLTAPWLGGS). The propeptide occupies 16–30 (VPISPDPGLRHEQVG). One can recognise a Peptidase S1 domain in the interval 31-275 (IVGGCKVPAR…YVSWIHQHIP (245 aa)). A disulfide bond links Cys-62 and Cys-78. His-77 (charge relay system) is an active-site residue. Asn-106 and Asn-117 each carry an N-linked (GlcNAc...) asparagine glycan. Asp-127 serves as the catalytic Charge relay system. 3 disulfides stabilise this stretch: Cys-161/Cys-234, Cys-194/Cys-215, and Cys-224/Cys-252. The active-site Charge relay system is Ser-228.

The protein belongs to the peptidase S1 family. In terms of assembly, oligomer; disulfide-linked. N-glycosylated. As to expression, mononuclear cells within skin, intestine, trachea and lung parenchyma, and polymorphonuclear leukocytes within capillaries and blood.

It is found in the cytoplasm. With respect to regulation, inhibited by leupeptin and bis(5-amidino-2-benzimidazolyl)methane (BABIM). Functionally, trypsin-like serine protease. Has a preference for extended substrates with basic residues at the P1 position; Arg is preferred over Lys. Active towards calcitonin gene-related peptide and gelatin. Not active towards substance P, vasoactive intestinal peptide, type I collagen or azocasein. The protein is Mastin of Canis lupus familiaris (Dog).